The sequence spans 430 residues: Histidine--tRNA ligase (430 aa).

Belongs to the class-II aminoacyl-tRNA synthetase family. In terms of assembly, homodimer.

The protein localises to the cytoplasm. It catalyses the reaction tRNA(His) + L-histidine + ATP = L-histidyl-tRNA(His) + AMP + diphosphate + H(+). This chain is Histidine--tRNA ligase, found in Lactococcus lactis subsp. lactis (strain IL1403) (Streptococcus lactis).